We begin with the raw amino-acid sequence, 237 residues long: Ribonuclease PH (237 aa).

Phosphate contacts are provided by residues arginine 86 and 124–126 (GTR).

Belongs to the RNase PH family. As to quaternary structure, homohexameric ring arranged as a trimer of dimers.

It carries out the reaction tRNA(n+1) + phosphate = tRNA(n) + a ribonucleoside 5'-diphosphate. In terms of biological role, phosphorolytic 3'-5' exoribonuclease that plays an important role in tRNA 3'-end maturation. Removes nucleotide residues following the 3'-CCA terminus of tRNAs; can also add nucleotides to the ends of RNA molecules by using nucleoside diphosphates as substrates, but this may not be physiologically important. Probably plays a role in initiation of 16S rRNA degradation (leading to ribosome degradation) during starvation. This is Ribonuclease PH from Nitrobacter hamburgensis (strain DSM 10229 / NCIMB 13809 / X14).